The sequence spans 230 residues: 6-carboxyhexanoate--CoA ligase (230 aa).

The protein belongs to the BioW family. As to quaternary structure, homodimer. Mg(2+) serves as cofactor.

It carries out the reaction heptanedioate + ATP + CoA = 6-carboxyhexanoyl-CoA + AMP + diphosphate. It participates in metabolic intermediate metabolism; pimeloyl-CoA biosynthesis; pimeloyl-CoA from pimelate: step 1/1. Its function is as follows. Catalyzes the transformation of pimelate into pimeloyl-CoA with concomitant hydrolysis of ATP to AMP. In Staphylococcus aureus (strain MRSA252), this protein is 6-carboxyhexanoate--CoA ligase.